Reading from the N-terminus, the 190-residue chain is Ribosome maturation factor RimP (190 aa).

Positions 159 to 190 (ELELAGGIPEGRVAPADADASEDEEVVEGLDK) are disordered. The span at 177–190 (DASEDEEVVEGLDK) shows a compositional bias: acidic residues.

Belongs to the RimP family.

The protein localises to the cytoplasm. Required for maturation of 30S ribosomal subunits. This Rhodococcus opacus (strain B4) protein is Ribosome maturation factor RimP.